Consider the following 132-residue polypeptide: Small ribosomal subunit protein uS8c (132 aa).

It belongs to the universal ribosomal protein uS8 family. In terms of assembly, part of the 30S ribosomal subunit.

It localises to the plastid. Its subcellular location is the chloroplast. In terms of biological role, one of the primary rRNA binding proteins, it binds directly to 16S rRNA central domain where it helps coordinate assembly of the platform of the 30S subunit. The sequence is that of Small ribosomal subunit protein uS8c (rps8) from Angiopteris evecta (Mule's foot fern).